A 617-amino-acid polypeptide reads, in one-letter code: uncharacterized protein (617 aa).

Residues 387–396 are compositionally biased toward polar residues; the sequence is NGGMSATQLP. Disordered stretches follow at residues 387 to 419 and 443 to 599; these read NGGMSATQLPAPTRDSQRQAAANQFQQRTHAAP and YDDF…NNEQ. Residues 404 to 414 are compositionally biased toward low complexity; that stretch reads RQAAANQFQQR. The span at 453-474 shows a compositional bias: polar residues; the sequence is QPLTQQQKDAARQRYQSASPEQ. Basic and acidic residues-rich tracts occupy residues 490–499 and 522–531; these read QRREAARERI and QRRDAARERI. Residues 549–570 show a composition bias toward polar residues; that stretch reads RPLNQQQRDNARQRVQSASPEQ. Over residues 572-585 the composition is skewed to basic and acidic residues; sequence QVFREKVQESRPQR. Residues 586–599 are compositionally biased toward polar residues; the sequence is LNDSNHTVRLNNEQ.

This is an uncharacterized protein from Escherichia coli (strain K12).